The chain runs to 1135 residues: Exportin-6-A (1135 aa).

In terms of domain architecture, Importin N-terminal spans 31 to 97 (IESLLNNFAQ…RNSLPKLLLS (67 aa)).

This sequence belongs to the exportin family. Expressed during meiotic maturation 2 hours after germinal vesicle break down (GVBD) and in unfertilized and fertilized eggs, but not in oocytes (at protein level). Expressed in somatic cells, in oocytes, during meiotic maturation and in unfertilized and fertilized eggs.

Its subcellular location is the nucleus. The protein localises to the cytoplasm. In terms of biological role, mediates the nuclear export of actin and profilin-actin complexes in somatic cells. Oocyte nuclei lack active actin export. This Xenopus laevis (African clawed frog) protein is Exportin-6-A (xpo6-a).